Reading from the N-terminus, the 363-residue chain is MEAVDLLANVSVTGLLLFWGDCEFFVSEILYDENLSENAQETRKVLLNNFRVVHVRNPQEFPFPSDYKEEDGSDDNRSSSLGRSAQSDDASLASDNQDDGIPEYFGDIPPVAAQDIVNVLKQGYLEKKRKDHSFFGSEWQKRWCVLNNLVFYYFGSDKDKQQKGSFYISDYSVQLVTNLRKDSRKTSCFEFFAPGRRPFQFTAGSPQEAKEWVDQIKIVLRDLSSTVIPVDDEEEEEEEEETYDDIEGEGGPPLPQPLSGTWGRGGDTGAADEEDEDIYEVLPEESPDSADGSMERNNKPEYANYYQGLWDCSADEPDELPFQRGDLIYIISKEYNIYGWWVGELNGAVGIVPKDFLHPAYIL.

The interval P62–S94 is disordered. Residues S84–S94 show a composition bias toward low complexity. A PH domain is found at N118 to R221. The segment at V227 to E273 is disordered. The segment covering V230–G248 has biased composition (acidic residues). Residues E301–I362 enclose the SH3 domain.

The protein belongs to the SKAP family. As to quaternary structure, homodimer. Phosphorylated on tyrosines.

It is found in the cytoplasm. The protein localises to the nucleus. The protein resides in the cell membrane. Its function is as follows. Positively regulates T-cell receptor signaling. Required for optimal conjugation between T-cells and antigen-presenting cells. In Takifugu rubripes (Japanese pufferfish), this protein is Src kinase-associated phosphoprotein 1 (skap1).